A 98-amino-acid polypeptide reads, in one-letter code: Keratin-associated protein 3-3 (98 aa).

3 repeat units span residues 3-7, 47-51, and 89-93. Residues 3 to 59 form a 3 X 5 AA repeats of C-C-X(3) region; that stretch reads CCASRGCSVPTGPATTICSSDKSCRCGVCLPSTCPHTVWLLEPTCCDNCPPPCHIPQ.

The protein belongs to the KRTAP type 3 family. As to quaternary structure, interacts with hair keratins. Localized to the upper cortex of the hair shaft.

Functionally, in the hair cortex, hair keratin intermediate filaments are embedded in an interfilamentous matrix, consisting of hair keratin-associated proteins (KRTAP), which are essential for the formation of a rigid and resistant hair shaft through their extensive disulfide bond cross-linking with abundant cysteine residues of hair keratins. The matrix proteins include the high-sulfur and high-glycine-tyrosine keratins. The sequence is that of Keratin-associated protein 3-3 (KRTAP3-3) from Homo sapiens (Human).